A 303-amino-acid polypeptide reads, in one-letter code: Heme A synthase (303 aa).

The Cytoplasmic segment spans residues 1–8 (MFGKKNLK). A helical membrane pass occupies residues 9-29 (WLGVVATLMMTFVQLGGALVT). At 30 to 67 (KTGSADGCGSSWPLCHGALIPEFFPIDTIIELSHRAVS) the chain is on the extracellular side. Cys37 and Cys44 are joined by a disulfide. Residue Glu60 is part of the active site. A heme o-binding site is contributed by His63. Residues 68-88 (ALSLLMVLWLVITAWKHIGYI) form a helical membrane-spanning segment. Over 89 to 93 (KEIKP) the chain is Cytoplasmic. The chain crosses the membrane as a helical span at residues 94 to 114 (LSIISVGFLLLQALIGAAAVI). The Extracellular segment spans residues 115–125 (WQQNDYVLALH). Heme o is bound at residue His125. The chain crosses the membrane as a helical span at residues 126-146 (FGISLISFSSVFLITLIIFSI). Residues 147–163 (DQKYEADELYIKKPLRR) lie on the Cytoplasmic side of the membrane. Residues 164–184 (LTWLMAIIIYCGVYTGALVRH) form a helical membrane-spanning segment. The Extracellular portion of the chain corresponds to 185–215 (ADASLAYGGWPLPFHDLVPHSEQDWVQLTHR). Residue His214 coordinates heme b. Residues 216–236 (IMAFIVFTIIMITYIHAVKNY) form a helical membrane-spanning segment. Topologically, residues 237 to 244 (PNNRTVHY) are cytoplasmic. The helical transmembrane segment at 245–265 (GYTAAFILVILQVITGALSIM) threads the bilayer. The Extracellular segment spans residues 266–270 (TNVNL). A helical membrane pass occupies residues 271–291 (IIALFHALFITYLFGMTTYFI). Residue His276 coordinates heme b. Over 292 to 303 (MLMLRSVRSDKQ) the chain is Cytoplasmic.

This sequence belongs to the COX15/CtaA family. Type 1 subfamily. In terms of assembly, interacts with CtaB. Heme b is required as a cofactor.

Its subcellular location is the cell membrane. It carries out the reaction Fe(II)-heme o + 2 A + H2O = Fe(II)-heme a + 2 AH2. It functions in the pathway porphyrin-containing compound metabolism; heme A biosynthesis; heme A from heme O: step 1/1. In terms of biological role, catalyzes the conversion of heme O to heme A by two successive hydroxylations of the methyl group at C8. The first hydroxylation forms heme I, the second hydroxylation results in an unstable dihydroxymethyl group, which spontaneously dehydrates, resulting in the formyl group of heme A. The chain is Heme A synthase from Staphylococcus aureus (strain Mu3 / ATCC 700698).